We begin with the raw amino-acid sequence, 72 residues long: Translation initiation factor IF-1 (72 aa).

The S1-like domain maps to 1–72 (MSKQDVIEFD…TKGRITYRGK (72 aa)).

Belongs to the IF-1 family. Component of the 30S ribosomal translation pre-initiation complex which assembles on the 30S ribosome in the order IF-2 and IF-3, IF-1 and N-formylmethionyl-tRNA(fMet); mRNA recruitment can occur at any time during PIC assembly.

It is found in the cytoplasm. In terms of biological role, one of the essential components for the initiation of protein synthesis. Stabilizes the binding of IF-2 and IF-3 on the 30S subunit to which N-formylmethionyl-tRNA(fMet) subsequently binds. Helps modulate mRNA selection, yielding the 30S pre-initiation complex (PIC). Upon addition of the 50S ribosomal subunit IF-1, IF-2 and IF-3 are released leaving the mature 70S translation initiation complex. The sequence is that of Translation initiation factor IF-1 from Hydrogenovibrio crunogenus (strain DSM 25203 / XCL-2) (Thiomicrospira crunogena).